We begin with the raw amino-acid sequence, 442 residues long: C4-dicarboxylate transport protein (442 aa).

A run of 8 helical transmembrane segments spans residues 19–39 (QLYF…HFEP), 55–75 (LVKM…IAGM), 90–110 (AYFL…AHVV), 161–181 (ILQV…VGDA), 199–219 (LVGI…AFTI), 232–252 (WLVG…LGFV), 318–338 (IYMT…LTLG), and 366–386 (AATL…ILGV).

It belongs to the dicarboxylate/amino acid:cation symporter (DAACS) (TC 2.A.23) family.

The protein localises to the cell inner membrane. Responsible for the transport of dicarboxylates such as succinate, fumarate, and malate from the periplasm across the membrane. The protein is C4-dicarboxylate transport protein of Delftia acidovorans (strain DSM 14801 / SPH-1).